A 441-amino-acid chain; its full sequence is Zinc finger and BTB domain-containing protein 26 (441 aa).

One can recognise a BTB domain in the interval 33-97 (CDVTVLIDDI…CYSGVLEFPE (65 aa)). The segment at 134–177 (DSKEGCEPQSASPQSKEQQGDARGSPKQDSPCIHPSEDSMDMED) is disordered. K184 participates in a covalent cross-link: Glycyl lysine isopeptide (Lys-Gly) (interchain with G-Cter in SUMO2). Residues 194–216 (VRSKKDQNQFISSEPTALHSSEP) are disordered. A compositionally biased stretch (polar residues) spans 201–216 (NQFISSEPTALHSSEP). K255 participates in a covalent cross-link: Glycyl lysine isopeptide (Lys-Gly) (interchain with G-Cter in SUMO2). 4 consecutive C2H2-type zinc fingers follow at residues 273 to 295 (HQCP…LKMH), 298 to 320 (FMCL…MRVH), 326 to 348 (FQCK…LNLH), and 354 to 377 (HKCN…KQLH). K329 participates in a covalent cross-link: Glycyl lysine isopeptide (Lys-Gly) (interchain with G-Cter in SUMO2).

In terms of tissue distribution, ubiquitous.

The protein resides in the nucleus. May be involved in transcriptional regulation. The polypeptide is Zinc finger and BTB domain-containing protein 26 (ZBTB26) (Homo sapiens (Human)).